We begin with the raw amino-acid sequence, 166 residues long: Regulatory protein RecX (166 aa).

This sequence belongs to the RecX family.

The protein localises to the cytoplasm. Functionally, modulates RecA activity. The sequence is that of Regulatory protein RecX from Escherichia coli (strain K12 / MC4100 / BW2952).